Reading from the N-terminus, the 191-residue chain is Leucyl/phenylalanyl-tRNA--protein transferase (191 aa).

It belongs to the L/F-transferase family.

It is found in the cytoplasm. It catalyses the reaction N-terminal L-lysyl-[protein] + L-leucyl-tRNA(Leu) = N-terminal L-leucyl-L-lysyl-[protein] + tRNA(Leu) + H(+). It carries out the reaction N-terminal L-arginyl-[protein] + L-leucyl-tRNA(Leu) = N-terminal L-leucyl-L-arginyl-[protein] + tRNA(Leu) + H(+). The enzyme catalyses L-phenylalanyl-tRNA(Phe) + an N-terminal L-alpha-aminoacyl-[protein] = an N-terminal L-phenylalanyl-L-alpha-aminoacyl-[protein] + tRNA(Phe). Its function is as follows. Functions in the N-end rule pathway of protein degradation where it conjugates Leu, Phe and, less efficiently, Met from aminoacyl-tRNAs to the N-termini of proteins containing an N-terminal arginine or lysine. The polypeptide is Leucyl/phenylalanyl-tRNA--protein transferase (Gloeothece citriformis (strain PCC 7424) (Cyanothece sp. (strain PCC 7424))).